Reading from the N-terminus, the 255-residue chain is Ly6/PLAUR domain-containing protein 8 (255 aa).

The first 20 residues, 1 to 20 (MRGVFIAGVIAAFAITVVDS), serve as a signal peptide directing secretion. N-linked (GlcNAc...) asparagine glycosylation is found at asparagine 22, asparagine 30, asparagine 53, asparagine 72, asparagine 76, asparagine 105, asparagine 115, asparagine 128, asparagine 154, asparagine 169, asparagine 179, asparagine 200, and asparagine 210. The UPAR/Ly6 domain occupies 121–170 (CMSCYGHNKTLCEEKPQKCYEGEQCVFIIAEMVNGSGRVELKGCSDISNS). The GPI-anchor amidated serine moiety is linked to residue serine 233. A propeptide spans 234 to 255 (MGTKASFTSSIFGSLLLLKLLF) (removed in mature form).

Belongs to the CNF-like-inhibitor family. Post-translationally, highly N-glycosylated. Not O-glycosylated. GPI-anchored. The GPI-anchor is cleaved, leading to secretion into the colonic lumen. Specifically present in enterocytes located at the uppermost epithelial layer of the colon (at protein level). Exclusively expressed in the large intestine: specifically expressed on the apical surface of epithelial cells located at the uppermost layer of the colonic gland.

The protein localises to the cell membrane. Its subcellular location is the secreted. Secreted protein specifically required to prevent invasion of Gram-negative bacteria in the inner mucus layer of the colon epithelium, a portion of the large intestine which is free of commensal microbiota. Prevents invasion of flagellated microbiota by binding to the flagellum of bacteria, such as P.mirabilis, thereby inhibiting bacterial motility in the intestinal lumen. Segregation of intestinal bacteria and epithelial cells in the colon is required to preserve intestinal homeostasis. In Mus musculus (Mouse), this protein is Ly6/PLAUR domain-containing protein 8.